Here is a 407-residue protein sequence, read N- to C-terminus: Homeobox even-skipped homolog protein 1 (407 aa).

Disordered regions lie at residues 29–120 and 137–179; these read EAVG…SDFY and EYQH…ACSA. The span at 102 to 114 shows a compositional bias: polar residues; sequence DSLSGQGQPSSSD. A DNA-binding region (homeobox) is located at residues 183–242; it reads MRRYRTAFTREQIARLEKEFYRENYVSRPRRCELAAALNLPETTIKVWFQNRRMKDKRQR.

This sequence belongs to the even-skipped homeobox family.

The protein resides in the nucleus. In terms of biological role, may play a role in the specification of neuronal cell types. In Homo sapiens (Human), this protein is Homeobox even-skipped homolog protein 1 (EVX1).